The chain runs to 1721 residues: Latent-transforming growth factor beta-binding protein 1 (1721 aa).

The first 23 residues, 1-23 (MAGAWLRWGLLLWAGLLASSAHG), serve as a signal peptide directing secretion. A compositionally biased stretch (low complexity) spans 64–81 (RSSAAAGAPSRASPGVPS). The interval 64 to 158 (RSSAAAGAPS…SGGGSRLQVH (95 aa)) is disordered. Residues 99-111 (RPPPPPPPEPARP) show a composition bias toward pro residues. Over residues 112-130 (AVPGGQLHPNPGGHPAAAP) the composition is skewed to low complexity. The 33-residue stretch at 187–219 (TKPSCVPPCQNGGMCLRPQLCVCKPGTKGKACE) folds into the EGF-like 1 domain. 3 disulfide bridges follow: Cys-191/Cys-201, Cys-195/Cys-207, and Cys-209/Cys-218. Residues 228–259 (SPVFGGQSPGAASSWGPPEQAAKHTSSKKADT) form a disordered region. N-linked (GlcNAc...) asparagine glycosylation is found at Asn-347 and Asn-378. The 33-residue stretch at 399 to 431 (RVVICHLPCMNGGQCSSRDKCQCPPNFTGKLCQ) folds into the EGF-like 2 domain. 6 disulfides stabilise this stretch: Cys-403–Cys-413, Cys-407–Cys-419, Cys-421–Cys-430, Cys-559–Cys-581, Cys-568–Cys-594, and Cys-582–Cys-597. Asn-424 is a glycosylation site (N-linked (GlcNAc...) asparagine). The TB 1 domain occupies 557-609 (GRCFQETIGSQCGKALPGLSKQEDCCGTVGTSWGFNKCQKCPKKPSYHGYNQM). Residue Asn-620 is glycosylated (N-linked (GlcNAc...) asparagine). The EGF-like 3; calcium-binding domain occupies 626-663 (DINECQLQGVCPNGECLNTMGSYRCTCKIGFGPDPTFS). Disulfide bonds link Cys-630/Cys-641, Cys-636/Cys-650, Cys-652/Cys-665, Cys-679/Cys-702, Cys-689/Cys-714, Cys-703/Cys-717, and Cys-704/Cys-729. Residue Ser-647 is glycosylated (O-linked (Glc) serine). Positions 677-729 (GPCYRLVSSGRQCMHPLSVHLTKQLCCCSVGKAWGPHCEKCPLPGTAAFKEIC) constitute a TB 2 domain. The segment at 750 to 811 (VGKGPVFVKP…APPEKEIPSL (62 aa)) is disordered. Residues Thr-769 and Thr-801 are each glycosylated (O-linked (GalNAc...) threonine). Positions 873–910 (EINECTVNPDICGAGHCINLPVRYTCICYEGYRFSEQQ) constitute an EGF-like 4; calcium-binding domain. Disulfide bonds link Cys-877-Cys-889, Cys-884-Cys-898, Cys-900-Cys-913, Cys-919-Cys-931, Cys-926-Cys-940, Cys-942-Cys-955, Cys-961-Cys-972, Cys-967-Cys-981, Cys-984-Cys-996, Cys-1002-Cys-1013, Cys-1008-Cys-1022, Cys-1025-Cys-1036, Cys-1042-Cys-1053, Cys-1048-Cys-1062, Cys-1064-Cys-1077, Cys-1083-Cys-1094, Cys-1089-Cys-1103, Cys-1105-Cys-1118, Cys-1124-Cys-1135, Cys-1130-Cys-1144, Cys-1146-Cys-1159, Cys-1165-Cys-1177, Cys-1172-Cys-1186, Cys-1188-Cys-1200, Cys-1206-Cys-1218, Cys-1212-Cys-1227, Cys-1229-Cys-1242, Cys-1248-Cys-1260, and Cys-1254-Cys-1269. An EGF-like 5; calcium-binding domain is found at 915-956 (DIDECTQVQHLCSQGRCENTEGSFLCICPAGFMASEEGTNCI). Residue Ser-937 is glycosylated (O-linked (Glc) serine). Residues 957-997 (DVDECLRPDVCGEGHCVNTVGAFRCEYCDSGYRMTQRGRCE) enclose the EGF-like 6; calcium-binding domain. At Asn-974 the chain carries (3R)-3-hydroxyasparagine. Positions 998 to 1037 (DIDECLNPSTCPDEQCVNSPGSYQCVPCTEGFRGWNGQCL) constitute an EGF-like 7; calcium-binding domain. O-linked (Glc) serine glycosylation occurs at Ser-1019. Positions 1038 to 1078 (DVDECLEPNVCANGDCSNLEGSYMCSCHKGYTRTPDHKHCR) constitute an EGF-like 8; calcium-binding domain. An O-linked (Glc) serine glycan is attached at Ser-1059. Positions 1079 to 1119 (DIDECQQGNLCVNGQCKNTEGSFRCTCGQGYQLSAAKDQCE) constitute an EGF-like 9; calcium-binding domain. Residues 1120 to 1160 (DIDECQHRHLCAHGQCRNTEGSFQCVCDQGYRASGLGDHCE) form the EGF-like 10; calcium-binding domain. Asn-1137 is subject to (3R)-3-hydroxyasparagine. Ser-1141 carries O-linked (Glc) serine glycosylation. Residues 1161 to 1201 (DINECLEDKSVCQRGDCINTAGSYDCTCPDGFQLDDNKTCQ) enclose the EGF-like 11; calcium-binding domain. The Cell attachment site signature appears at 1174–1176 (RGD). N-linked (GlcNAc...) asparagine glycosylation occurs at Asn-1197. An EGF-like 12; calcium-binding domain is found at 1202–1243 (DINECEHPGLCGPQGECLNTEGSFHCVCQQGFSISADGRTCE). Ser-1224 carries O-linked (Glc) serine glycosylation. Residues 1244–1281 (DIDECVNNTVCDSHGFCDNTAGSFRCLCYQGFQAPQDG) form the EGF-like 13; calcium-binding domain. Asn-1250 carries N-linked (GlcNAc...) asparagine glycosylation. The EGF-like 14; calcium-binding domain occupies 1286-1328 (DVNECELLSGVCGEAFCENVEGSFLCVCADENQEYSPMTGQCR). The 8-Cys3 region stretch occupies residues 1344–1411 (EEKKECYYNL…PKGKGFVPAG (68 aa)). Residues 1347 to 1401 (KECYYNLNDASLCDNVLAPNVTKQECCCTSGVGWGDNCEIFPCPVLGTAEFTEMC) enclose the TB 3 domain. 4 cysteine pairs are disulfide-bonded: Cys-1349–Cys-1372, Cys-1359–Cys-1384, Cys-1373–Cys-1389, and Cys-1374–Cys-1401. A glycan (N-linked (GlcNAc...) asparagine) is linked at Asn-1366. Ser-1414 is modified (phosphoserine; by FAM20C). One can recognise an EGF-like 15; calcium-binding domain in the interval 1424-1466 (DADECLLFGQEICKNGFCLNTRPGYECYCKQGTYYDPVKLQCF). Residues 1467–1503 (DMDECQDPSSCIDGQCVNTEGSYNCFCTHPMVLDASE) enclose the EGF-like 16; calcium-binding domain. 6 disulfide bridges follow: Cys-1471-Cys-1482, Cys-1477-Cys-1491, Cys-1526-Cys-1550, Cys-1536-Cys-1562, Cys-1551-Cys-1565, and Cys-1552-Cys-1577. Ser-1488 carries an O-linked (Glc) serine glycan. Residues 1507 to 1721 (IRPAESNEQI…LNLEKDSDLE (215 aa)) are C-terminal domain. The region spanning 1524–1577 (DLCWEHLSDEYVCSRPLVGKQTTYTECCCLYGEAWGMQCALCPLKDSDDYAQLC) is the TB 4 domain. Ser-1597 and Ser-1616 each carry phosphoserine. One can recognise an EGF-like 17 domain in the interval 1621–1657 (QAEECGILNGCENGRCVRVQEGYTCDCFDGYHLDTAK). Intrachain disulfides connect Cys-1625/Cys-1636, Cys-1631/Cys-1645, Cys-1666/Cys-1681, Cys-1676/Cys-1690, and Cys-1692/Cys-1705. Positions 1662–1706 (DVNECDELNNRMSLCKNAKCINTDGSYKCLCLPGYVPSDKPNYCT) constitute an EGF-like 18; calcium-binding domain. Ser-1687 carries an O-linked (Glc) serine glycan.

Belongs to the LTBP family. As to quaternary structure, interacts with TGFB1; associates via disulfide bonds with the Latency-associated peptide chain (LAP) regulatory chain of TGFB1, leading to regulate activation of TGF-beta-1. LTBP1 does not bind directly to TGF-beta-1, the active chain of TGFB1. Interacts (via C-terminal domain) with FBN1 (via N-terminal domain). Interacts with FBN2. Interacts with ADAMTSL2. Interacts with EFEMP2. Contains hydroxylated asparagine residues. Post-translationally, isoform Short N-terminus is blocked. In terms of processing, two intrachain disulfide bonds from the TB3 domain are rearranged upon TGFB1 binding, and form interchain bonds with TGFB1 propeptide, anchoring it to the extracellular matrix. O-glycosylated on serine residues by POGLUT2 and POGLUT3. As to expression, expressed in the aorta (at protein level). Isoform Long: Expressed in fibroblasts.

It is found in the secreted. The protein resides in the extracellular space. It localises to the extracellular matrix. Its function is as follows. Key regulator of transforming growth factor beta (TGFB1, TGFB2 and TGFB3) that controls TGF-beta activation by maintaining it in a latent state during storage in extracellular space. Associates specifically via disulfide bonds with the Latency-associated peptide (LAP), which is the regulatory chain of TGF-beta, and regulates integrin-dependent activation of TGF-beta. Outcompeted by LRRC32/GARP for binding to LAP regulatory chain of TGF-beta. This Homo sapiens (Human) protein is Latent-transforming growth factor beta-binding protein 1.